The chain runs to 587 residues: Thioredoxin domain-containing protein 3 (587 aa).

The region spanning 2–119 (ASKKREVQLQ…VIALIDEEKK (118 aa)) is the Thioredoxin domain. A disulfide bridge connects residues Cys39 and Cys42. NDK regions lie at residues 157-255 (MAVI…PLEE), 313-453 (VQRT…STLA), and 454-587 (LIKP…NFEN).

This sequence in the C-terminal section; belongs to the NDK family. Monomer. As to expression, testis-specific.

Its subcellular location is the cytoplasm. Probably required during the final stages of sperm tail maturation in the testis and/or epididymis, where extensive disulfide bonding of fibrous sheath (FS) proteins occurs. In vitro, it has neither nucleoside diphosphate kinase (NDPK) activity nor reducing activity on disulfide bonds. Exhibits a 3'-5' exonuclease activity with a preference for single-stranded DNA, suggesting roles in DNA proofreading and repair. The polypeptide is Thioredoxin domain-containing protein 3 (Nme8) (Rattus norvegicus (Rat)).